A 180-amino-acid chain; its full sequence is NAD(P)H-quinone oxidoreductase subunit I, chloroplastic (180 aa).

2 consecutive 4Fe-4S ferredoxin-type domains span residues 55-84 and 95-124; these read GRIH…VDWK and LNYS…MTEE. Residues Cys64, Cys67, Cys70, Cys74, Cys104, Cys107, Cys110, and Cys114 each contribute to the [4Fe-4S] cluster site.

It belongs to the complex I 23 kDa subunit family. As to quaternary structure, NDH is composed of at least 16 different subunits, 5 of which are encoded in the nucleus. Requires [4Fe-4S] cluster as cofactor.

Its subcellular location is the plastid. The protein resides in the chloroplast thylakoid membrane. The enzyme catalyses a plastoquinone + NADH + (n+1) H(+)(in) = a plastoquinol + NAD(+) + n H(+)(out). The catalysed reaction is a plastoquinone + NADPH + (n+1) H(+)(in) = a plastoquinol + NADP(+) + n H(+)(out). In terms of biological role, NDH shuttles electrons from NAD(P)H:plastoquinone, via FMN and iron-sulfur (Fe-S) centers, to quinones in the photosynthetic chain and possibly in a chloroplast respiratory chain. The immediate electron acceptor for the enzyme in this species is believed to be plastoquinone. Couples the redox reaction to proton translocation, and thus conserves the redox energy in a proton gradient. This chain is NAD(P)H-quinone oxidoreductase subunit I, chloroplastic, found in Ranunculus macranthus (Large buttercup).